Reading from the N-terminus, the 841-residue chain is MGRVEYLKKEYSDEEIYEILEKPVKEWFKRKYKTFTPPQRYAIKEIHEGKNVLICSPTGSGKTLSAFLAGINELIKLSMENKLEDRIYILYVSPLRALNNDIERNLKEPLKEIYDVAKEIGIELDEIRVAVRTSDTTSSQKQRMLKKPPHILITTPESLAIALNSPKFSQLLSGIKYVIVDEIHALTNKRGVHLSLSLERLNRIANFIRIGLSATIHPLTEVAKFLVGNGRDCYIVDVSYKKEIEIKVISPVDDFIYTPSEEISKRLYNLLKKLIEEHKTTLIFTNTRSATERVAFYLKQLGVEKVETHHSSLSREHRLEVEEKLKKGEIRVCISSTSLELGVDIGSIDLVILLGSPKSVSRALQRIGRSGHRLHEKSKGIIIPFDRDDLVENVVLAYDAKIGKIDRIHIPKNCLDVLAQHLVGMALEKVWDVDEAYNLIKKAYPYKDLSKKDFLDVLNYLAGGIEEKNVYAKIWLKDNKFGKRGKSVRAIYYMNVGTIPDETAVDVIADGKYVGEVEEEFAEKLMKGDIFVLGGKTYKYLGGRGNKIRVKEVFDEKPTIPAWFSEQLPLAYDLALDIEKFRKEVLSSDIEEIREKYDIDEKTAKAIKNYMDEQNKFAIVPDDEKVLIENFDEEKRRYYIFHFVAGRRANEALARAFANYISKIKKCNVRISVNDYGFALILPKNRKIKRADITELFNLDVVKNVKESIERSEILKRRFRHVATRGFMILRRYMNRKISVDRQQFNAEMLLKYCKEVNHPLYRETLREILEDSLDIDNALDYFEKIKRRKIYYLELPSPSPFAFNLVVSASSDVIFMEDKKKMIAELHKKVMEFISMKGKK.

8 residues coordinate ATP: Gln39, Lys62, Thr63, Asp181, Glu182, Ile352, Arg369, and His372. Positions 43 to 234 (IKEIHEGKNV…FLVGNGRDCY (192 aa)) constitute a Helicase ATP-binding domain. Positions 181 to 184 (DEIH) match the DEVH box motif. The 151-residue stretch at 266–416 (RLYNLLKKLI…RIHIPKNCLD (151 aa)) folds into the Helicase C-terminal domain. The interval 417 to 500 (VLAQHLVGMA…IYYMNVGTIP (84 aa)) is WH domain. Residues 501-841 (DETAVDVIAD…MEFISMKGKK (341 aa)) form a domain 4 region.

This sequence belongs to the Lhr helicase family. Lhr-Core subfamily. In terms of assembly, monomer.

The enzyme catalyses Couples ATP hydrolysis with the unwinding of duplex DNA by translocating in the 3'-5' direction.. It carries out the reaction ATP + H2O = ADP + phosphate + H(+). DNA helicase that loads on single-stranded (ss)DNA and translocates in a 3'-5' direction, probably involved in DNA repair. Archaeal orthologs have double-stranded (ds)DNA and/or RNA:DNA helicase activity. The polypeptide is ATP-dependent helicase Lhr-Core (Methanocaldococcus jannaschii (strain ATCC 43067 / DSM 2661 / JAL-1 / JCM 10045 / NBRC 100440) (Methanococcus jannaschii)).